The primary structure comprises 110 residues: Parvalbumin alpha (110 aa).

At Ser2 the chain carries N-acetylserine. Ser2 and Ser24 each carry phosphoserine. EF-hand domains follow at residues 39–74 and 78–110; these read KSAD…FSPD and LSAK…VAES. The Ca(2+) site is built by Asp52, Asp54, Ser56, Phe58, Glu60, Glu63, Asp91, Asp93, Asp95, Lys97, and Glu102.

This sequence belongs to the parvalbumin family.

Functionally, in muscle, parvalbumin is thought to be involved in relaxation after contraction. It binds two calcium ions. The polypeptide is Parvalbumin alpha (PVALB) (Macaca fuscata fuscata (Japanese macaque)).